The chain runs to 350 residues: Probable dual-specificity RNA methyltransferase RlmN (350 aa).

The active-site Proton acceptor is glutamate 98. One can recognise a Radical SAM core domain in the interval 104 to 334 (HTYGNSVCVS…VTVRRELGGD (231 aa)). A disulfide bridge links cysteine 111 with cysteine 339. [4Fe-4S] cluster-binding residues include cysteine 118, cysteine 122, and cysteine 125. Residues 165–166 (GE), serine 197, 220–222 (SLH), and asparagine 296 each bind S-adenosyl-L-methionine. Cysteine 339 (S-methylcysteine intermediate) is an active-site residue.

The protein belongs to the radical SAM superfamily. RlmN family. It depends on [4Fe-4S] cluster as a cofactor.

The protein resides in the cytoplasm. It catalyses the reaction adenosine(2503) in 23S rRNA + 2 reduced [2Fe-2S]-[ferredoxin] + 2 S-adenosyl-L-methionine = 2-methyladenosine(2503) in 23S rRNA + 5'-deoxyadenosine + L-methionine + 2 oxidized [2Fe-2S]-[ferredoxin] + S-adenosyl-L-homocysteine. It carries out the reaction adenosine(37) in tRNA + 2 reduced [2Fe-2S]-[ferredoxin] + 2 S-adenosyl-L-methionine = 2-methyladenosine(37) in tRNA + 5'-deoxyadenosine + L-methionine + 2 oxidized [2Fe-2S]-[ferredoxin] + S-adenosyl-L-homocysteine. Functionally, specifically methylates position 2 of adenine 2503 in 23S rRNA and position 2 of adenine 37 in tRNAs. The polypeptide is Probable dual-specificity RNA methyltransferase RlmN (Desulforamulus reducens (strain ATCC BAA-1160 / DSM 100696 / MI-1) (Desulfotomaculum reducens)).